The primary structure comprises 311 residues: Ribosomal RNA small subunit methyltransferase H (311 aa).

Residues 32–34, D52, F79, D100, and Q107 contribute to the S-adenosyl-L-methionine site; that span reads AGH.

Belongs to the methyltransferase superfamily. RsmH family.

It is found in the cytoplasm. It carries out the reaction cytidine(1402) in 16S rRNA + S-adenosyl-L-methionine = N(4)-methylcytidine(1402) in 16S rRNA + S-adenosyl-L-homocysteine + H(+). Specifically methylates the N4 position of cytidine in position 1402 (C1402) of 16S rRNA. This Staphylococcus aureus (strain Mu3 / ATCC 700698) protein is Ribosomal RNA small subunit methyltransferase H.